Here is an 84-residue protein sequence, read N- to C-terminus: Gomesin (84 aa).

The N-terminal stretch at 1 to 23 (MNRTRLFACLLLAVLILVHESNA) is a signal peptide. Pyrrolidone carboxylic acid is present on Q24. Intrachain disulfides connect C25–C38 and C29–C34. Arginine amide is present on R41. Positions 42–84 (GKRSLDETNVGTSDVEKRAFDDSNVPSLVEERELEDEGSFIFD) are excised as a propeptide.

In hemocytes only, but not in all hemocytes observed.

The protein resides in the secreted. In terms of biological role, active against several Gram-positive bacteria such as Bacillus spp, Staphylococcus spp and E.faecalis, several Gram-negative bacteria such as E.coli, K.pneumoniae, P.aeruginosa and Salmonella spp, filamentous fungi such as N.crassa, T.viridae and yeasts such as C.albicans. It is active against the parasite L.amazonensis as well. It shows hemolytic activity. The protein is Gomesin of Acanthoscurria gomesiana (Tarantula spider).